The following is a 229-amino-acid chain: Cytidylate kinase (229 aa).

Residue 12–20 (GPSGTGKSS) participates in ATP binding.

It belongs to the cytidylate kinase family. Type 1 subfamily.

It is found in the cytoplasm. It carries out the reaction CMP + ATP = CDP + ADP. The enzyme catalyses dCMP + ATP = dCDP + ADP. The protein is Cytidylate kinase of Rhodococcus opacus (strain B4).